The following is a 92-amino-acid chain: Acylphosphatase (92 aa).

Positions 5 to 92 (RAHVFISGRV…GKEGIFTIVW (88 aa)) constitute an Acylphosphatase-like domain. Active-site residues include Arg-20 and Asn-38.

Belongs to the acylphosphatase family.

The enzyme catalyses an acyl phosphate + H2O = a carboxylate + phosphate + H(+). The polypeptide is Acylphosphatase (acyP) (Chloroflexus aurantiacus (strain ATCC 29366 / DSM 635 / J-10-fl)).